Consider the following 971-residue polypeptide: Translation initiation factor IF-2 (971 aa).

Positions 49–63 (HLRKSHGATDGDKRK) are enriched in basic and acidic residues. 2 disordered regions span residues 49–85 (HLRKSHGATDGDKRKITLTRKHTSEIKQSDATGKART) and 99–386 (RDDV…PTEP). Residues 105–114 (GAEQGQAQVA) are compositionally biased toward low complexity. Residues 121–181 (ELKRREEEAR…EEEAAAKRAA (61 aa)) show a composition bias toward basic and acidic residues. A compositionally biased stretch (low complexity) spans 182–200 (AEAAAAQQAAAQQAAAEQE). Residues 209-260 (DEARAAAERAAQREAAKKAEDAAREAADKARAEQEEISKRRAAAEAEARAIR) show a composition bias toward basic and acidic residues. Residues 303-325 (ARPAVKKPAGAAAPATTQAPAGA) show a composition bias toward low complexity. Over residues 355–368 (SSGGVDRGWRGGPK) the composition is skewed to gly residues. Positions 471–640 (PRPPVVTVMG…LLQAEVLELK (170 aa)) constitute a tr-type G domain. A G1 region spans residues 480–487 (GHVDHGKT). 480–487 (GHVDHGKT) contributes to the GTP binding site. The G2 stretch occupies residues 505-509 (GITQH). Residues 526–529 (DTPG) are G3. Residues 526-530 (DTPGH) and 580-583 (NKID) contribute to the GTP site. The interval 580–583 (NKID) is G4. The G5 stretch occupies residues 616–618 (SAK).

Belongs to the TRAFAC class translation factor GTPase superfamily. Classic translation factor GTPase family. IF-2 subfamily.

It is found in the cytoplasm. Its function is as follows. One of the essential components for the initiation of protein synthesis. Protects formylmethionyl-tRNA from spontaneous hydrolysis and promotes its binding to the 30S ribosomal subunits. Also involved in the hydrolysis of GTP during the formation of the 70S ribosomal complex. The protein is Translation initiation factor IF-2 of Burkholderia cenocepacia (strain ATCC BAA-245 / DSM 16553 / LMG 16656 / NCTC 13227 / J2315 / CF5610) (Burkholderia cepacia (strain J2315)).